The sequence spans 1045 residues: Fibrosin-1-like protein (1045 aa).

The span at 1-12 (MEAKVRPSRRSR) shows a compositional bias: basic residues. Disordered stretches follow at residues 1-86 (MEAK…DGFA) and 99-315 (DMAL…THVP). A compositionally biased stretch (basic and acidic residues) spans 13 to 28 (AQRDRGRRREAARDAR). Over residues 48 to 63 (GLRGAPPRGAAPAPRT) the composition is skewed to low complexity. A compositionally biased stretch (basic and acidic residues) spans 99-123 (DMALKPHERKEKWERRLIKKPRESE). A compositionally biased stretch (polar residues) spans 183-197 (EATSSRDPLSDSSAH). Pro residues predominate over residues 270–280 (HAAPCPGPPPG). Phosphoserine is present on S340. Basic residues predominate over residues 443 to 457 (QHTHQHTHQHTHQHQ). 2 disordered regions span residues 443-462 (QHTH…TFAP) and 719-753 (EGSS…PKSV). The segment covering 741-750 (PSFPAPPPWP) has biased composition (pro residues). A Phosphoserine modification is found at S790. 2 disordered regions span residues 809-880 (ELGR…APLQ) and 910-961 (AAAP…PALD). The segment covering 817–837 (AEREAEPRVKESRSPAKEEAA) has biased composition (basic and acidic residues). Residue K858 forms a Glycyl lysine isopeptide (Lys-Gly) (interchain with G-Cter in SUMO2) linkage. Over residues 910–922 (AAAPAPGSAALLE) the composition is skewed to low complexity. Basic and acidic residues predominate over residues 923 to 949 (PPERPYRDREPHGYSPERLRGELERAR). Phosphoserine is present on residues S937 and S977. Phosphothreonine occurs at positions 989 and 1010. The tract at residues 991–1045 (PAAAALGAPPPLVTAAGPPTPPGPPRSRTTPLGGLGPGEARDYSPSRNPPEVEAR) is disordered. Residues 998–1015 (APPPLVTAAGPPTPPGPP) show a composition bias toward pro residues. The span at 1029-1045 (EARDYSPSRNPPEVEAR) shows a compositional bias: basic and acidic residues.

It belongs to the AUTS2 family.

The chain is Fibrosin-1-like protein (FBRSL1) from Homo sapiens (Human).